We begin with the raw amino-acid sequence, 620 residues long: Probable potassium transport system protein Kup 2 (620 aa).

Transmembrane regions (helical) follow at residues Leu-10–Leu-30, Val-50–Ile-70, Met-102–Ile-122, Pro-136–Ile-156, Phe-168–Ile-188, Leu-211–Tyr-231, Trp-246–Ile-266, Met-284–Ile-304, Ile-336–Phe-356, Ile-368–Leu-388, Met-393–Ala-413, and Ile-415–Val-435.

The protein belongs to the HAK/KUP transporter (TC 2.A.72) family.

Its subcellular location is the cell inner membrane. It catalyses the reaction K(+)(in) + H(+)(in) = K(+)(out) + H(+)(out). Its function is as follows. Transport of potassium into the cell. Likely operates as a K(+):H(+) symporter. The polypeptide is Probable potassium transport system protein Kup 2 (Rhodopseudomonas palustris (strain BisB5)).